The sequence spans 224 residues: Myogenin (224 aa).

Residues S77 and S79 each carry the phosphoserine; by CaMK2G modification. Residues 81–132 (DRRRAATLREKRRLKKVNEAFEALKRSTLLNPNQRLPKVEILRSAIQYIERL) enclose the bHLH domain. T87 carries the post-translational modification Phosphothreonine; by CaMK2G.

Homodimer and heterodimer with E12; heterodimerization enhances MYOG DNA-binding and transcriptional activities. Interacts with SMARCA4/BRG1/BAF190A. Interacts (via C-terminal region) with SSRP1 and SUPT16H; the interaction is indicative of an interaction with the FACT complex. Interacts with CSRP3. In terms of processing, phosphorylated by CAMK2G on threonine and serine amino acids in a muscle activity-dependent manner. Phosphorylation of Thr-87 impairs both DNA-binding and trans-activation functions in contracting muscles.

It is found in the nucleus. In terms of biological role, acts as a transcriptional activator that promotes transcription of muscle-specific target genes and plays a role in muscle differentiation, cell cycle exit and muscle atrophy. Essential for the development of functional embryonic skeletal fiber muscle differentiation. However is dispensable for postnatal skeletal muscle growth; phosphorylation by CAMK2G inhibits its transcriptional activity in respons to muscle activity. Required for the recruitment of the FACT complex to muscle-specific promoter regions, thus promoting gene expression initiation. During terminal myoblast differentiation, plays a role as a strong activator of transcription at loci with an open chromatin structure previously initiated by MYOD1. Together with MYF5 and MYOD1, co-occupies muscle-specific gene promoter core regions during myogenesis. Also cooperates with myocyte-specific enhancer factor MEF2D and BRG1-dependent recruitment of SWI/SNF chromatin-remodeling enzymes to alter chromatin structure at myogenic late gene promoters. Facilitates cell cycle exit during terminal muscle differentiation through the up-regulation of miR-20a expression, which in turn represses genes involved in cell cycle progression. Binds to the E-box containing (E1) promoter region of the miR-20a gene. Also plays a role in preventing reversal of muscle cell differentiation. Contributes to the atrophy-related gene expression in adult denervated muscles. Induces fibroblasts to differentiate into myoblasts. The polypeptide is Myogenin (MYOG) (Bos taurus (Bovine)).